We begin with the raw amino-acid sequence, 224 residues long: Thiamine-triphosphatase (224 aa).

An N-acetylalanine modification is found at Ala2. In terms of domain architecture, CYTH spans 5 to 201 (LIEVERKFTP…AKLLVYLQRF (197 aa)). Glu7 and Glu9 together coordinate Mg(2+). Lys11, Arg55, Arg57, Lys65, and Arg125 together coordinate substrate. Residues Asp145, Glu157, and Glu159 each contribute to the Mg(2+) site. Glu157 contributes to the substrate binding site. Lys193 serves as a coordination point for substrate.

This sequence belongs to the ThTPase family. As to quaternary structure, monomer. Mg(2+) serves as cofactor.

It localises to the cytoplasm. It carries out the reaction thiamine triphosphate + H2O = thiamine diphosphate + phosphate + H(+). Functionally, hydrolase highly specific for thiamine triphosphate (ThTP). The polypeptide is Thiamine-triphosphatase (Thtpa) (Rattus norvegicus (Rat)).